We begin with the raw amino-acid sequence, 184 residues long: Peptide deformylase 2 (184 aa).

2 residues coordinate Fe cation: Cys110 and His153. The active site involves Glu154. His157 lines the Fe cation pocket.

This sequence belongs to the polypeptide deformylase family. Fe(2+) is required as a cofactor.

It catalyses the reaction N-terminal N-formyl-L-methionyl-[peptide] + H2O = N-terminal L-methionyl-[peptide] + formate. Removes the formyl group from the N-terminal Met of newly synthesized proteins. Requires at least a dipeptide for an efficient rate of reaction. N-terminal L-methionine is a prerequisite for activity but the enzyme has broad specificity at other positions. The chain is Peptide deformylase 2 from Bacillus cereus (strain ATCC 14579 / DSM 31 / CCUG 7414 / JCM 2152 / NBRC 15305 / NCIMB 9373 / NCTC 2599 / NRRL B-3711).